Here is a 154-residue protein sequence, read N- to C-terminus: Ribonuclease H (154 aa).

The 142-residue stretch at 1–142 (MQKQIEIFTD…CDELAKKGAE (142 aa)) folds into the RNase H type-1 domain. Mg(2+) is bound by residues aspartate 10, glutamate 48, aspartate 70, and aspartate 134.

Belongs to the RNase H family. As to quaternary structure, monomer. Mg(2+) is required as a cofactor.

It localises to the cytoplasm. It carries out the reaction Endonucleolytic cleavage to 5'-phosphomonoester.. Endonuclease that specifically degrades the RNA of RNA-DNA hybrids. The polypeptide is Ribonuclease H (Haemophilus influenzae (strain 86-028NP)).